The primary structure comprises 246 residues: Ribonuclease 3 (246 aa).

An RNase III domain is found at 10–135; it reads LENFLTLNNI…FVAAIYLDLG (126 aa). Position 50 (Glu-50) interacts with Mg(2+). Asp-54 is an active-site residue. Residues Asp-121 and Glu-124 each coordinate Mg(2+). Glu-124 is a catalytic residue. Positions 161-230 constitute a DRBM domain; the sequence is DPKSSFQEYI…ATRALETLKA (70 aa).

It belongs to the ribonuclease III family. In terms of assembly, homodimer. It depends on Mg(2+) as a cofactor.

The protein resides in the cytoplasm. It carries out the reaction Endonucleolytic cleavage to 5'-phosphomonoester.. Digests double-stranded RNA. Involved in the processing of primary rRNA transcript to yield the immediate precursors to the large and small rRNAs (23S and 16S). Processes some mRNAs, and tRNAs when they are encoded in the rRNA operon. Processes pre-crRNA and tracrRNA of type II CRISPR loci if present in the organism. The chain is Ribonuclease 3 from Mycoplasma mobile (strain ATCC 43663 / 163K / NCTC 11711) (Mesomycoplasma mobile).